A 707-amino-acid polypeptide reads, in one-letter code: UvrABC system protein C (707 aa).

A GIY-YIG domain is found at A14–V94. In terms of domain architecture, UVR spans G206 to S241. A disordered region spans residues D655 to A707. Composition is skewed to low complexity over residues A660–G670 and A677–E689. Over residues A690–A707 the composition is skewed to acidic residues.

It belongs to the UvrC family. Interacts with UvrB in an incision complex.

The protein localises to the cytoplasm. Its function is as follows. The UvrABC repair system catalyzes the recognition and processing of DNA lesions. UvrC both incises the 5' and 3' sides of the lesion. The N-terminal half is responsible for the 3' incision and the C-terminal half is responsible for the 5' incision. The chain is UvrABC system protein C from Anaeromyxobacter dehalogenans (strain 2CP-1 / ATCC BAA-258).